A 555-amino-acid chain; its full sequence is Lysine--tRNA ligase (555 aa).

A 'HIGH' region motif is present at residues 37–45 (TSGRLHVGN). Positions 301-305 (AMSSS) match the 'KMSKS' region motif.

Belongs to the class-I aminoacyl-tRNA synthetase family.

It is found in the cytoplasm. The catalysed reaction is tRNA(Lys) + L-lysine + ATP = L-lysyl-tRNA(Lys) + AMP + diphosphate. In Methanopyrus kandleri (strain AV19 / DSM 6324 / JCM 9639 / NBRC 100938), this protein is Lysine--tRNA ligase.